The sequence spans 579 residues: Deleted in azoospermia protein 4 (579 aa).

Residues 1-10 are compositionally biased toward polar residues; it reads MSAANPETPN. Positions 1–27 are disordered; it reads MSAANPETPNSTISREASTQSSSAAAS. Low complexity predominate over residues 11–27; that stretch reads STISREASTQSSSAAAS. One can recognise an RRM 1 domain in the interval 40-115; the sequence is NTVFVGGIDA…KKLKLGPAIR (76 aa). Polar residues predominate over residues 163-175; it reads QHVQSAANPETPN. The segment at 163 to 192 is disordered; it reads QHVQSAANPETPNSTISREASTQSSSAAAS. Residues 176 to 192 show a composition bias toward low complexity; it reads STISREASTQSSSAAAS. The 76-residue stretch at 205 to 280 folds into the RRM 2 domain; that stretch reads NTVFVGGIDA…KKLKLGPAIR (76 aa). DAZ domains are found at residues 332 to 355, 356 to 379, 380 to 403, 404 to 427, 428 to 451, 452 to 475, 476 to 499, 500 to 523, and 524 to 547; these read AYSAYPHSPGQVITGCQLLVYNYQ, EYPTYPDSAFQVTTGYQLPVYNYQ, PFPAYPRSPFQVTAGYQLPVYNYQ, AFPAYPNSPFQVATGYQFPVYNYQ, PFPAYPSSPFQVTAGYQLPVYNYQ, AFPAYPNSPVQVTTGYQLPVYNYQ, AFPAYPSSPFQVTTGYQLPVYNYQ, and AFPAYPNSAVQVTTGYQFHVYNYQ.

The protein belongs to the RRM DAZ family. As to quaternary structure, forms a heterodimer with BOLL and DAZL. Interacts with PUM2, DAZAP1, DAZAP2, DZIP1 and DZIP3. In terms of tissue distribution, testis-specific. Expression restricted to premeiotic germ cells, particularly in spermatogonia (at protein level).

It localises to the cytoplasm. The protein resides in the nucleus. RNA-binding protein that plays an essential role in spermatogenesis. May act by binding to the 3'-UTR of mRNAs and regulating their translation. In Homo sapiens (Human), this protein is Deleted in azoospermia protein 4 (DAZ4).